Reading from the N-terminus, the 151-residue chain is FAD synthase (151 aa).

Residues 21–22 (TF), 26–29 (HPGH), and aspartate 104 contribute to the ATP site.

This sequence belongs to the archaeal FAD synthase family. Homodimer. A divalent metal cation serves as cofactor.

The enzyme catalyses FMN + ATP + H(+) = FAD + diphosphate. It participates in cofactor biosynthesis; FAD biosynthesis; FAD from FMN: step 1/1. Catalyzes the transfer of the AMP portion of ATP to flavin mononucleotide (FMN) to produce flavin adenine dinucleotide (FAD) coenzyme. This Methanosarcina mazei (strain ATCC BAA-159 / DSM 3647 / Goe1 / Go1 / JCM 11833 / OCM 88) (Methanosarcina frisia) protein is FAD synthase.